The primary structure comprises 414 residues: Gamma-glutamyl phosphate reductase (414 aa).

This sequence belongs to the gamma-glutamyl phosphate reductase family.

It is found in the cytoplasm. It catalyses the reaction L-glutamate 5-semialdehyde + phosphate + NADP(+) = L-glutamyl 5-phosphate + NADPH + H(+). Its pathway is amino-acid biosynthesis; L-proline biosynthesis; L-glutamate 5-semialdehyde from L-glutamate: step 2/2. Its function is as follows. Catalyzes the NADPH-dependent reduction of L-glutamate 5-phosphate into L-glutamate 5-semialdehyde and phosphate. The product spontaneously undergoes cyclization to form 1-pyrroline-5-carboxylate. This is Gamma-glutamyl phosphate reductase from Xanthomonas oryzae pv. oryzae (strain MAFF 311018).